We begin with the raw amino-acid sequence, 531 residues long: Inactive beta-amylase 4, chloroplastic (531 aa).

A chloroplast-targeting transit peptide spans 1–62 (MTETGVIGCG…KRGRFITKLR (62 aa)).

The protein belongs to the glycosyl hydrolase 14 family. In terms of tissue distribution, preferentially expressed in vascular tissue of cotyledons, leaves, petioles, stems, petals, siliques and roots, particularly in phloem. Also present in root tip.

It localises to the plastid. It is found in the chloroplast. In terms of biological role, no alpha-1,4-glucan hydrolase activity, including beta-amylase, alpha-amylase, a-glucosidase or alpha-amyloglucosidase. However, facilitates or regulates starch breakdown, especially at night, by a mechanism involving direct interaction with starch or other alpha-1,4-glucan. This chain is Inactive beta-amylase 4, chloroplastic (BAM4), found in Arabidopsis thaliana (Mouse-ear cress).